A 692-amino-acid chain; its full sequence is Elongation factor G (692 aa).

Residues 8–282 enclose the tr-type G domain; that stretch reads EKTRNIGIMA…AVVEYMPAPT (275 aa). GTP is bound by residues 17 to 24, 81 to 85, and 135 to 138; these read AHIDAGKT, DTPGH, and NKMD. A disordered region spans residues 285-304; it reads PNIKGVHPETGEADERHSSD. Residues 290–304 are compositionally biased toward basic and acidic residues; it reads VHPETGEADERHSSD.

It belongs to the TRAFAC class translation factor GTPase superfamily. Classic translation factor GTPase family. EF-G/EF-2 subfamily.

Its subcellular location is the cytoplasm. Its function is as follows. Catalyzes the GTP-dependent ribosomal translocation step during translation elongation. During this step, the ribosome changes from the pre-translocational (PRE) to the post-translocational (POST) state as the newly formed A-site-bound peptidyl-tRNA and P-site-bound deacylated tRNA move to the P and E sites, respectively. Catalyzes the coordinated movement of the two tRNA molecules, the mRNA and conformational changes in the ribosome. This is Elongation factor G from Desulfitobacterium hafniense (strain DSM 10664 / DCB-2).